Consider the following 255-residue polypeptide: Ribonuclease HII (255 aa).

An RNase H type-2 domain is found at 70-255; the sequence is DLVAGIDEVG…FEPVPEFLIK (186 aa). A divalent metal cation contacts are provided by aspartate 76, glutamate 77, and aspartate 168.

It belongs to the RNase HII family. Mn(2+) serves as cofactor. Mg(2+) is required as a cofactor.

Its subcellular location is the cytoplasm. The enzyme catalyses Endonucleolytic cleavage to 5'-phosphomonoester.. Functionally, endonuclease that specifically degrades the RNA of RNA-DNA hybrids. This Pediococcus pentosaceus (strain ATCC 25745 / CCUG 21536 / LMG 10740 / 183-1w) protein is Ribonuclease HII.